Consider the following 375-residue polypeptide: Putative glutamate--cysteine ligase 2 (375 aa).

The protein belongs to the glutamate--cysteine ligase type 2 family. YbdK subfamily.

It catalyses the reaction L-cysteine + L-glutamate + ATP = gamma-L-glutamyl-L-cysteine + ADP + phosphate + H(+). Functionally, ATP-dependent carboxylate-amine ligase which exhibits weak glutamate--cysteine ligase activity. The protein is Putative glutamate--cysteine ligase 2 of Azoarcus sp. (strain BH72).